The sequence spans 204 residues: AFG2-interacting ribosome maturation factor (204 aa).

As to quaternary structure, part of the 55LCC heterohexameric ATPase complex. Does not associate with pre-60S ribosomal particles.

The protein resides in the nucleus. It localises to the cytoplasm. Part of the 55LCC heterohexameric ATPase complex which is chromatin-associated and promotes replisome proteostasis to maintain replication fork progression and genome stability. Required for replication fork progression, sister chromatid cohesion, and chromosome stability. The ATPase activity is specifically enhanced by replication fork DNA and is coupled to cysteine protease-dependent cleavage of replisome substrates in response to replication fork damage. Uses ATPase activity to process replisome substrates in S-phase, facilitating their proteolytic turnover from chromatin to ensure DNA replication and mitotic fidelity. Involved in the cytoplasmic maturation steps of pre-60S ribosomal particles by promoting the release of shuttling protein RSL24D1/RLP24 from the pre-ribosomal particles. The protein is AFG2-interacting ribosome maturation factor (airim) of Xenopus tropicalis (Western clawed frog).